Consider the following 137-residue polypeptide: DDRSHILAIWPSVASHGADYGGEALYRLFLSNPQTKTYFPNFDFHKDSPQIKAHGKKVVDALTEASKHLDNINGALSKLFDLHAFELRVDPGNFPLLAHHINVTIAVMFPDDKFDIAHHQLDKFLAAVGGSLTSKYR.

The region spanning 1–137 (DDRSHILAIW…VGGSLTSKYR (137 aa)) is the Globin domain. H54 is a binding site for O2. H83 is a binding site for heme b.

The protein belongs to the globin family. In terms of processing, the N-terminus of the mature protein is acetylated. In terms of tissue distribution, red blood cells.

In Telmatobius peruvianus (Andean frog), this protein is Hemoglobin subunit alpha-2.